The sequence spans 243 residues: UPF0246 protein Spy49_1742 (243 aa).

The protein belongs to the UPF0246 family.

This chain is UPF0246 protein Spy49_1742, found in Streptococcus pyogenes serotype M49 (strain NZ131).